Reading from the N-terminus, the 639-residue chain is Phosphomethylpyrimidine synthase (639 aa).

Positions 49-71 are disordered; it reads DTPTDFGGEQNRPVRVYDTSGPY. Substrate contacts are provided by residues Asn-231, Met-260, Tyr-289, His-325, 345 to 347, 386 to 389, and Glu-425; these read SRG and DGLR. Zn(2+) is bound at residue His-429. Tyr-452 is a binding site for substrate. Zn(2+) is bound at residue His-493. [4Fe-4S] cluster-binding residues include Cys-573, Cys-576, and Cys-581.

This sequence belongs to the ThiC family. As to quaternary structure, homodimer. [4Fe-4S] cluster serves as cofactor.

It catalyses the reaction 5-amino-1-(5-phospho-beta-D-ribosyl)imidazole + S-adenosyl-L-methionine = 4-amino-2-methyl-5-(phosphooxymethyl)pyrimidine + CO + 5'-deoxyadenosine + formate + L-methionine + 3 H(+). The protein operates within cofactor biosynthesis; thiamine diphosphate biosynthesis. Functionally, catalyzes the synthesis of the hydroxymethylpyrimidine phosphate (HMP-P) moiety of thiamine from aminoimidazole ribotide (AIR) in a radical S-adenosyl-L-methionine (SAM)-dependent reaction. The sequence is that of Phosphomethylpyrimidine synthase from Teredinibacter turnerae (strain ATCC 39867 / T7901).